The chain runs to 311 residues: Putative pyruvate, phosphate dikinase regulatory protein (311 aa).

An ADP-binding site is contributed by 180 to 187 (GVSRSSKT).

Belongs to the pyruvate, phosphate/water dikinase regulatory protein family. PDRP subfamily.

The catalysed reaction is N(tele)-phospho-L-histidyl/L-threonyl-[pyruvate, phosphate dikinase] + ADP = N(tele)-phospho-L-histidyl/O-phospho-L-threonyl-[pyruvate, phosphate dikinase] + AMP + H(+). It carries out the reaction N(tele)-phospho-L-histidyl/O-phospho-L-threonyl-[pyruvate, phosphate dikinase] + phosphate + H(+) = N(tele)-phospho-L-histidyl/L-threonyl-[pyruvate, phosphate dikinase] + diphosphate. In terms of biological role, bifunctional serine/threonine kinase and phosphorylase involved in the regulation of the pyruvate, phosphate dikinase (PPDK) by catalyzing its phosphorylation/dephosphorylation. This Paramagnetospirillum magneticum (strain ATCC 700264 / AMB-1) (Magnetospirillum magneticum) protein is Putative pyruvate, phosphate dikinase regulatory protein.